A 309-amino-acid polypeptide reads, in one-letter code: Taste receptor type 2 member 31 (309 aa).

Residues 1–2 (MI) are Extracellular-facing. The chain crosses the membrane as a helical span at residues 3–23 (TFLPIIFSILVVVTFVIGNFA). The Cytoplasmic segment spans residues 24–55 (NGFIALVNSTEWVKRQKISFADQILTALAVSR). The helical transmembrane segment at 56–76 (VGLLWVLLLNWYATVLNPAFY) threads the bilayer. Residues 77 to 100 (SVEVRTTTYNVWAVTNHFSNWLAT) are Extracellular-facing. Residues 101 to 121 (SLSIFYLLKIANFSNLIFLHL) form a helical membrane-spanning segment. Residues 122 to 126 (KRRVK) are Cytoplasmic-facing. A helical membrane pass occupies residues 127 to 147 (NVILVMLLGPLLILACHLFMV). Residues 148 to 181 (NMNEIVRTKEYEENMTWKYILRNAIYHPGMTVTT) are Extracellular-facing. An N-linked (GlcNAc...) asparagine glycan is attached at Asn-161. A helical membrane pass occupies residues 182-202 (LQNLVPFTLTLISFLLLICSL). The Cytoplasmic segment spans residues 203-229 (CKHLKKMQLHGKGPQDPSTKVHIKALQ). The chain crosses the membrane as a helical span at residues 230-250 (IVISFLLLCVIYFVSVIISIW). Over 251–259 (SFESLGNKP) the chain is Extracellular. A helical membrane pass occupies residues 260–280 (VFMFCQAIRFSYPSAHPFIVI). The Cytoplasmic segment spans residues 281–309 (WGNKKLKQTFLSVLWNVRYWVKGQKPSSL).

This sequence belongs to the G-protein coupled receptor T2R family.

The protein resides in the membrane. Functionally, receptor that may play a role in the perception of bitterness and is gustducin-linked. May play a role in sensing the chemical composition of the gastrointestinal content. The activity of this receptor may stimulate alpha gustducin, mediate PLC-beta-2 activation and lead to the gating of TRPM5. The protein is Taste receptor type 2 member 31 (TAS2R31) of Papio hamadryas (Hamadryas baboon).